A 161-amino-acid polypeptide reads, in one-letter code: Allophycocyanin alpha chain 2 (161 aa).

Residue asparagine 71 is modified to N4-methylasparagine. Cysteine 81 is a (2R,3E)-phycocyanobilin binding site.

It belongs to the phycobiliprotein family. Component of the phycobilisome. Heterodimer of an alpha and a beta chain. In terms of processing, contains one covalently linked bilin chromophore.

It localises to the cellular thylakoid membrane. Functionally, light-harvesting photosynthetic bile pigment-protein from the phycobiliprotein complex. Allophycocyanin has a maximum absorption at approximately 650 nanometers. The protein is Allophycocyanin alpha chain 2 (apcA2) of Microchaete diplosiphon (Fremyella diplosiphon).